The following is a 369-amino-acid chain: sn-glycerol-3-phosphate import ATP-binding protein UgpC 1 (369 aa).

Residues Ile-4–Val-234 form the ABC transporter domain. ATP is bound at residue Gly-36–Ser-43.

The protein belongs to the ABC transporter superfamily. sn-glycerol-3-phosphate importer (TC 3.A.1.1.3) family. As to quaternary structure, the complex is composed of two ATP-binding proteins (UgpC), two transmembrane proteins (UgpA and UgpE) and a solute-binding protein (UgpB).

It localises to the cell inner membrane. It catalyses the reaction sn-glycerol 3-phosphate(out) + ATP + H2O = sn-glycerol 3-phosphate(in) + ADP + phosphate + H(+). Its function is as follows. Part of the ABC transporter complex UgpBAEC involved in sn-glycerol-3-phosphate (G3P) import. Responsible for energy coupling to the transport system. The protein is sn-glycerol-3-phosphate import ATP-binding protein UgpC 1 of Rhizobium johnstonii (strain DSM 114642 / LMG 32736 / 3841) (Rhizobium leguminosarum bv. viciae).